The sequence spans 125 residues: Larval cuticle protein LCP-14 (125 aa).

Positions 1–16 (MKSFIVALCVVGCVLA) are cleaved as a signal peptide. The 70-residue stretch at 33–102 (EGSYNYAFES…PQADFLPTPP (70 aa)) folds into the Chitin-binding type R&amp;R domain.

Functionally, component of the cuticle of the larva of tobacco hornworm. This is Larval cuticle protein LCP-14 (LCP-14) from Manduca sexta (Tobacco hawkmoth).